A 177-amino-acid chain; its full sequence is Nucleoside triphosphate/diphosphate phosphatase (177 aa).

Residue arginine 23 is the Proton donor of the active site. Residues asparagine 87, aspartate 103, aspartate 105, aspartate 107, aspartate 120, and glutamate 123 each coordinate Mg(2+).

Belongs to the Ntdp family. Requires Mg(2+) as cofactor.

The enzyme catalyses a ribonucleoside 5'-triphosphate + H2O = a ribonucleoside 5'-diphosphate + phosphate + H(+). The catalysed reaction is a ribonucleoside 5'-diphosphate + H2O = a ribonucleoside 5'-phosphate + phosphate + H(+). Its function is as follows. Has nucleoside phosphatase activity towards nucleoside triphosphates and nucleoside diphosphates. The polypeptide is Nucleoside triphosphate/diphosphate phosphatase (Streptococcus suis (strain 98HAH33)).